The sequence spans 514 residues: Membrane-bound lytic murein transglycosylase F (514 aa).

Residues 1-30 (MKKLKINYLFIGILTLLLAAALWPSIPWFG) form the signal peptide. The interval 31-269 (KTENHIAAIQ…RIEEKYLGHG (239 aa)) is non-LT domain. The interval 270–514 (DDFDYVDTRS…LFTPQKKEEK (245 aa)) is LT domain. The active site involves Glu314.

It in the N-terminal section; belongs to the bacterial solute-binding protein 3 family. The protein in the C-terminal section; belongs to the transglycosylase Slt family.

Its subcellular location is the cell outer membrane. The enzyme catalyses Exolytic cleavage of the (1-&gt;4)-beta-glycosidic linkage between N-acetylmuramic acid (MurNAc) and N-acetylglucosamine (GlcNAc) residues in peptidoglycan, from either the reducing or the non-reducing ends of the peptidoglycan chains, with concomitant formation of a 1,6-anhydrobond in the MurNAc residue.. In terms of biological role, murein-degrading enzyme that degrades murein glycan strands and insoluble, high-molecular weight murein sacculi, with the concomitant formation of a 1,6-anhydromuramoyl product. Lytic transglycosylases (LTs) play an integral role in the metabolism of the peptidoglycan (PG) sacculus. Their lytic action creates space within the PG sacculus to allow for its expansion as well as for the insertion of various structures such as secretion systems and flagella. This is Membrane-bound lytic murein transglycosylase F from Salmonella choleraesuis (strain SC-B67).